The primary structure comprises 83 residues: Small ribosomal subunit protein eS21 (83 aa).

The protein belongs to the eukaryotic ribosomal protein eS21 family. As to quaternary structure, component of the 40S small ribosomal subunit.

The protein localises to the cytoplasm. It is found in the cytosol. Its subcellular location is the rough endoplasmic reticulum. The protein is Small ribosomal subunit protein eS21 (RpS21) of Spodoptera frugiperda (Fall armyworm).